Here is a 381-residue protein sequence, read N- to C-terminus: E3 ubiquitin-protein ligase RNF34 (381 aa).

The segment at 56-107 (EGPNIVCKACGLSFSVFRKKHVCCDCKKDFCSLCSVSQENLRRCSTCHLLQE) adopts an FYVE-type zinc-finger fold. Residues 115–134 (LMRLKVKDLRQYLLLRNVPT) form the SAP 1 domain. S169 is modified (phosphoserine). The disordered stretch occupies residues 216–261 (LASANTDDEDGEEDDDDDDDDDDEDDDEQEENLEEQNPGLSKKKAR). Acidic residues predominate over residues 221-249 (TDDEDGEEDDDDDDDDDDEDDDEQEENLE). Phosphoserine is present on residues S263 and S265. The 15-residue stretch at 273–287 (VEGMSVRQLKEILAR) folds into the SAP 2 domain. Residues 334-369 (CRICMDAVIDCVLLECGHMVTCTKCGKRMSECPICR) form an RING-type zinc finger.

In terms of assembly, interacts with CASP8 and CASP10. Interacts with p53/TP53; involved in p53/TP53 ubiquitination. Interacts (via RING-type zinc finger) with MDM2; the interaction stabilizes MDM2. Interacts (via RING-type zinc finger) with PPARGC1A. Interacts with NOD1. Proteolytically cleaved by caspases upon induction of apoptosis by TNF. In terms of processing, autoubiquitinated (in vitro). As to expression, ubiquitous. Detected in brain, cerebellum, midbrain, hippocampus, striatum, heart, lung, kidney, muscle, spleen and testis.

Its subcellular location is the cell membrane. The protein resides in the endomembrane system. The protein localises to the nucleus. It is found in the nucleus speckle. It localises to the cytoplasm. Its subcellular location is the cytosol. It catalyses the reaction S-ubiquitinyl-[E2 ubiquitin-conjugating enzyme]-L-cysteine + [acceptor protein]-L-lysine = [E2 ubiquitin-conjugating enzyme]-L-cysteine + N(6)-ubiquitinyl-[acceptor protein]-L-lysine.. It functions in the pathway protein modification; protein ubiquitination. Functionally, E3 ubiquitin-protein ligase that regulates several biological processes through the ubiquitin-mediated proteasomal degradation of various target proteins. Ubiquitinates the caspases CASP8 and CASP10, promoting their proteasomal degradation, to negatively regulate cell death downstream of death domain receptors in the extrinsic pathway of apoptosis. May mediate 'Lys-48'-linked polyubiquitination of RIPK1 and its subsequent proteasomal degradation thereby indirectly regulating the tumor necrosis factor-mediated signaling pathway. Negatively regulates p53/TP53 through its direct ubiquitination and targeting to proteasomal degradation. Indirectly, may also negatively regulate p53/TP53 through ubiquitination and degradation of SFN. Mediates PPARGC1A proteasomal degradation probably through ubiquitination thereby indirectly regulating the metabolism of brown fat cells. Possibly involved in innate immunity, through 'Lys-48'-linked polyubiquitination of NOD1 and its subsequent proteasomal degradation. This chain is E3 ubiquitin-protein ligase RNF34, found in Rattus norvegicus (Rat).